Here is a 607-residue protein sequence, read N- to C-terminus: UvrABC system protein C (607 aa).

In terms of domain architecture, GIY-YIG spans 14-93 (HKPGVYLMLD…IKKHKPRYNI (80 aa)). The UVR domain occupies 203–238 (RDLLAELKRQMLQASERLNFEQAGQFRDQIRALKTT).

The protein belongs to the UvrC family. In terms of assembly, interacts with UvrB in an incision complex.

Its subcellular location is the cytoplasm. The UvrABC repair system catalyzes the recognition and processing of DNA lesions. UvrC both incises the 5' and 3' sides of the lesion. The N-terminal half is responsible for the 3' incision and the C-terminal half is responsible for the 5' incision. This is UvrABC system protein C from Desulfotalea psychrophila (strain LSv54 / DSM 12343).